The sequence spans 440 residues: T-box transcription factor TBX20 (440 aa).

The segment at residues 103 to 282 (LWDKFHELGT…SNPFAKGFRD (180 aa)) is a DNA-binding region (T-box). Residues 308–333 (IRTYGGEDDLGDDSQATQSRGSAFTT) are disordered. Residues 321 to 333 (SQATQSRGSAFTT) are compositionally biased toward polar residues.

The protein localises to the nucleus. Functionally, acts as a transcriptional regulator involved in heart developmental processes. The polypeptide is T-box transcription factor TBX20 (TBX20) (Gallus gallus (Chicken)).